The chain runs to 687 residues: Phage-like element PBSX protein XkdV (687 aa).

This sequence to B.subtilis YqcC.

The sequence is that of Phage-like element PBSX protein XkdV (xkdV) from Bacillus subtilis (strain 168).